The chain runs to 370 residues: MIRTVPVGLGERAYDVVIGPGLLDQAGERVAAVLGKRKRVAVVTDAHVGAHHGERLSAALQGAGITVDLITIAPGEESKSFEGLADLSDRLLALNLERGDQIVALGGGVVGDLAGFAAAIYKRGIDFVQVPTTLLAQVDSSVGGKTAIDTPRGKNLIGAFHQPRLVLADLDVLATLPARELACGYAEIIKYGLLGDFAFFEWLETNVQAVLDRDVDALVRAVGRSVEMKAEIVAEDEKEAGRRALLNLGHTFGHAIEAEMGFGEALKHGEAVGVGMAQAFRFSARLGLCPSQDAVRAQAAIKAAGLPTTLADVRPEPFSADALIAHCGQDKKAQGGKLTFVLARGIGDAFVAKDVDRAALKAFLVEEGAV.

Residues 108 to 112 (GVVGD), 132 to 133 (TT), lysine 145, and lysine 154 contribute to the NAD(+) site. 3 residues coordinate Zn(2+): glutamate 187, histidine 250, and histidine 268.

This sequence belongs to the sugar phosphate cyclases superfamily. Dehydroquinate synthase family. Requires Co(2+) as cofactor. Zn(2+) is required as a cofactor. The cofactor is NAD(+).

It localises to the cytoplasm. It carries out the reaction 7-phospho-2-dehydro-3-deoxy-D-arabino-heptonate = 3-dehydroquinate + phosphate. The protein operates within metabolic intermediate biosynthesis; chorismate biosynthesis; chorismate from D-erythrose 4-phosphate and phosphoenolpyruvate: step 2/7. In terms of biological role, catalyzes the conversion of 3-deoxy-D-arabino-heptulosonate 7-phosphate (DAHP) to dehydroquinate (DHQ). This chain is 3-dehydroquinate synthase, found in Caulobacter vibrioides (strain NA1000 / CB15N) (Caulobacter crescentus).